We begin with the raw amino-acid sequence, 95 residues long: Large ribosomal subunit protein bL25 (95 aa).

The protein belongs to the bacterial ribosomal protein bL25 family. As to quaternary structure, part of the 50S ribosomal subunit; part of the 5S rRNA/L5/L18/L25 subcomplex. Contacts the 5S rRNA. Binds to the 5S rRNA independently of L5 and L18.

Its function is as follows. This is one of the proteins that binds to the 5S RNA in the ribosome where it forms part of the central protuberance. The sequence is that of Large ribosomal subunit protein bL25 from Actinobacillus pleuropneumoniae serotype 3 (strain JL03).